A 332-amino-acid chain; its full sequence is Fructose-1,6-bisphosphatase class 1 (332 aa).

Residues E89, D110, L112, and D113 each contribute to the Mg(2+) site. Substrate-binding positions include 113 to 116 (DGSS), N206, Y239, 257 to 259 (YLY), and K269. E275 lines the Mg(2+) pocket.

It belongs to the FBPase class 1 family. Homotetramer. Mg(2+) serves as cofactor.

It is found in the cytoplasm. It catalyses the reaction beta-D-fructose 1,6-bisphosphate + H2O = beta-D-fructose 6-phosphate + phosphate. It participates in carbohydrate biosynthesis; gluconeogenesis. The chain is Fructose-1,6-bisphosphatase class 1 from Erwinia tasmaniensis (strain DSM 17950 / CFBP 7177 / CIP 109463 / NCPPB 4357 / Et1/99).